A 117-amino-acid polypeptide reads, in one-letter code: UPF0102 protein YE3728 (117 aa).

Belongs to the UPF0102 family.

The chain is UPF0102 protein YE3728 from Yersinia enterocolitica serotype O:8 / biotype 1B (strain NCTC 13174 / 8081).